A 442-amino-acid polypeptide reads, in one-letter code: tRNA modification GTPase MnmE (442 aa).

3 residues coordinate (6S)-5-formyl-5,6,7,8-tetrahydrofolate: R21, E79, and K118. The TrmE-type G domain occupies 214–367 (GFKIAIVGKP…LKEELQNYLN (154 aa)). N224 provides a ligand contact to K(+). GTP contacts are provided by residues 224 to 229 (NVGKSS), 243 to 249 (SDIAGTT), and 268 to 271 (DTAG). S228 lines the Mg(2+) pocket. Residues S243, I245, and T248 each coordinate K(+). Residue T249 participates in Mg(2+) binding. K442 is a (6S)-5-formyl-5,6,7,8-tetrahydrofolate binding site.

This sequence belongs to the TRAFAC class TrmE-Era-EngA-EngB-Septin-like GTPase superfamily. TrmE GTPase family. Homodimer. Heterotetramer of two MnmE and two MnmG subunits. The cofactor is K(+).

It is found in the cytoplasm. Functionally, exhibits a very high intrinsic GTPase hydrolysis rate. Involved in the addition of a carboxymethylaminomethyl (cmnm) group at the wobble position (U34) of certain tRNAs, forming tRNA-cmnm(5)s(2)U34. This chain is tRNA modification GTPase MnmE, found in Campylobacter jejuni (strain RM1221).